The following is a 507-amino-acid chain: ESX-5 secretion system ATPase EccB5 (507 aa).

A helical transmembrane segment spans residues 56-76; the sequence is VVASVSAALVICLGSLLWSFI.

Belongs to the EccB family. Part of the ESX-5 / type VII secretion system (T7SS), which is composed of cytosolic and membrane components. The ESX-5 membrane complex is composed of EccB5, EccC5, EccD5 and EccE5.

The protein localises to the cell inner membrane. In terms of biological role, an ATPase. Part of the ESX-5 specialized secretion system, which is responsible for the secretion of EsxN and a number of PE_PGRS and PPE proteins. The polypeptide is ESX-5 secretion system ATPase EccB5 (Mycobacterium marinum (strain ATCC BAA-535 / M)).